Reading from the N-terminus, the 237-residue chain is UDP-2,3-diacylglucosamine hydrolase (237 aa).

Asp-9, His-11, Asp-42, Asn-80, and His-115 together coordinate Mn(2+). Position 80–81 (80–81 (NR)) interacts with substrate. The substrate site is built by Asp-123, Ser-161, Lys-165, Lys-168, and His-196. Mn(2+) is bound by residues His-196 and His-198.

This sequence belongs to the LpxH family. Mn(2+) serves as cofactor.

The protein resides in the cell inner membrane. It localises to the cytoplasm. The catalysed reaction is UDP-2-N,3-O-bis[(3R)-3-hydroxytetradecanoyl]-alpha-D-glucosamine + H2O = 2-N,3-O-bis[(3R)-3-hydroxytetradecanoyl]-alpha-D-glucosaminyl 1-phosphate + UMP + 2 H(+). Its pathway is glycolipid biosynthesis; lipid IV(A) biosynthesis; lipid IV(A) from (3R)-3-hydroxytetradecanoyl-[acyl-carrier-protein] and UDP-N-acetyl-alpha-D-glucosamine: step 4/6. Its function is as follows. Hydrolyzes the pyrophosphate bond of UDP-2,3-diacylglucosamine to yield 2,3-diacylglucosamine 1-phosphate (lipid X) and UMP by catalyzing the attack of water at the alpha-P atom. Involved in the biosynthesis of lipid A, a phosphorylated glycolipid that anchors the lipopolysaccharide to the outer membrane of the cell. This is UDP-2,3-diacylglucosamine hydrolase from Haemophilus influenzae (strain ATCC 51907 / DSM 11121 / KW20 / Rd).